A 443-amino-acid chain; its full sequence is MHILVVSVNYRTAPVEFREKLTFQAAELEQAMNTLQNQKSVLENVIVSTCNRTEIYAVVDQLHTGRYYIKKFLADWFQLEIEEVAPYLSIFEQDGAIDHLFRVTCGLDSMVVGETQILGQIKDSFLEAQQVKATGTIFNELFKQVVTLAKRAHSETTIGESAMSVSYAAVELGKKIFGDLTDCHVLILGAGKMGELALQNLYGSGARKVTVMNRTLTKAEVMAEKYMGHAKPLSELQCALLEADILISSTGASEYVITKEMMTKVERMRSGRPLFMVDIAVPRDIDPAIDELEGSFLYDIDDLQGVVEANRAERLKEAEKIQFMIEEEMVLFKTWLSTLGVVPLISALRDKALAIQSDTMESLERKIPNLSDREKKVISKHTKSIINQLLKDPILVAKELAVEEGAGEKLALFAKIFDLEVEEAGNTEEVEHKRAWTPSVPSL.

Residues 49–52, Ser109, 114–116, and Gln120 contribute to the substrate site; these read TCNR and ETQ. Cys50 functions as the Nucleophile in the catalytic mechanism. 189-194 serves as a coordination point for NADP(+); sequence GAGKMG.

Belongs to the glutamyl-tRNA reductase family. As to quaternary structure, homodimer.

The enzyme catalyses (S)-4-amino-5-oxopentanoate + tRNA(Glu) + NADP(+) = L-glutamyl-tRNA(Glu) + NADPH + H(+). It participates in porphyrin-containing compound metabolism; protoporphyrin-IX biosynthesis; 5-aminolevulinate from L-glutamyl-tRNA(Glu): step 1/2. Its function is as follows. Catalyzes the NADPH-dependent reduction of glutamyl-tRNA(Glu) to glutamate 1-semialdehyde (GSA). The sequence is that of Glutamyl-tRNA reductase from Bacillus mycoides (strain KBAB4) (Bacillus weihenstephanensis).